A 217-amino-acid polypeptide reads, in one-letter code: Proteasome subunit beta type-9 (217 aa).

A propeptide spans 1-18 (MLDESLEPGWLSEEVKTG) (removed in mature form). Residue Thr19 is the Nucleophile of the active site.

The protein belongs to the peptidase T1B family. The 26S proteasome consists of a 20S proteasome core and two 19S regulatory subunits. The 20S proteasome core is composed of 28 subunits that are arranged in four stacked rings, resulting in a barrel-shaped structure. The two end rings are each formed by seven alpha subunits, and the two central rings are each formed by seven beta subunits. The catalytic chamber with the active sites is on the inside of the barrel. Component of the immunoproteasome, where it displaces the equivalent housekeeping subunit PSMB6. In terms of processing, autocleaved. The resulting N-terminal Thr residue of the mature subunit is responsible for the nucleophile proteolytic activity.

It is found in the cytoplasm. Its subcellular location is the nucleus. The catalysed reaction is Cleavage of peptide bonds with very broad specificity.. The proteasome is a multicatalytic proteinase complex which is characterized by its ability to cleave peptides with Arg, Phe, Tyr, Leu, and Glu adjacent to the leaving group at neutral or slightly basic pH. The proteasome has an ATP-dependent proteolytic activity. This subunit is involved in antigen processing to generate class I binding peptides. This is Proteasome subunit beta type-9 (psmb9) from Oncorhynchus mykiss (Rainbow trout).